The following is a 345-amino-acid chain: Chorismate synthase (345 aa).

Belongs to the chorismate synthase family. Homotetramer. The cofactor is FMNH2.

It catalyses the reaction 5-O-(1-carboxyvinyl)-3-phosphoshikimate = chorismate + phosphate. It participates in metabolic intermediate biosynthesis; chorismate biosynthesis; chorismate from D-erythrose 4-phosphate and phosphoenolpyruvate: step 7/7. This is Chorismate synthase (aroC) from Carsonella ruddii (strain PV).